Reading from the N-terminus, the 467-residue chain is Signal transduction histidine-protein kinase BaeS (467 aa).

The Cytoplasmic segment spans residues 1-11 (MKFWRPGITGK). A helical transmembrane segment spans residues 12-32 (LFLAIFATCIVLLISMHWAVR). Topologically, residues 33-167 (ISFERGFIDY…NFDKQQRQTS (135 aa)) are periplasmic. The chain crosses the membrane as a helical span at residues 168-186 (WLIVALATLLAALATFLLA). One can recognise an HAMP domain in the interval 187 to 239 (RGLLAPVKRLVDGTHKLAAGDFTTRVTPTSEDELGKLAQDFNQLASTLEKNQQ). Over 187-467 (RGLLAPVKRL…PLERDLQREV (281 aa)) the chain is Cytoplasmic. Residues 247–461 (DISHELRTPL…SITVELPLER (215 aa)) form the Histidine kinase domain. At histidine 250 the chain carries Phosphohistidine; by autocatalysis.

In terms of processing, autophosphorylated.

It localises to the cell inner membrane. The catalysed reaction is ATP + protein L-histidine = ADP + protein N-phospho-L-histidine.. Functionally, member of the two-component regulatory system BaeS/BaeR which responds to envelope stress. Activates expression of periplasmic chaperone spy in response to spheroplast formation, indole and P pili protein PapG overexpression. Activates BaeR by phosphorylation which then activates the mdtABCD and probably the CRISPR-Cas casABCDE-ygbT-ygbF operons. This is Signal transduction histidine-protein kinase BaeS from Escherichia coli (strain K12).